Consider the following 893-residue polypeptide: Protein kintoun (893 aa).

Disordered stretches follow at residues 211–243, 372–395, 587–719, 781–821, and 834–893; these read KNAT…VLPM, LSRE…EEAG, EQVH…SIDD, QRKK…QQTA, and PQNN…DEDM. The span at 214–232 shows a compositional bias: basic and acidic residues; it reads TAEEREPHPLEHTYPKKPE. Ser-377 is subject to Phosphoserine. Acidic residues predominate over residues 594 to 603; it reads QQEEEEEEEQ. The span at 609 to 626 shows a compositional bias: basic residues; it reads HQHKKGNKKQRKRNKKQR. Over residues 640–651 the composition is skewed to low complexity; the sequence is QQQQHQKQQQQQ. Polar residues-rich tracts occupy residues 656–667 and 684–694; these read ENSSPESLNAGS and FSECNDSSSVQ. Low complexity predominate over residues 709–719; the sequence is SISESSSSIDD. Residues 781–797 are compositionally biased toward basic residues; the sequence is QRKKNQKRRDCKLRAQQ. Ser-801 carries the post-translational modification Phosphoserine. A compositionally biased stretch (low complexity) spans 836–848; it reads NNNNRSYSKNNKN. Residues 865-877 are compositionally biased toward basic and acidic residues; the sequence is NNEEDTKRNEADA. The segment covering 884–893 has biased composition (acidic residues); that stretch reads EMDDDDDEDM.

The protein belongs to the PIH1 family. Kintoun subfamily. As to quaternary structure, interacts with Pp1alpha-96A, Pp1-87B, Pp1-13C and flw.

The protein localises to the cytoplasm. Required for cytoplasmic pre-assembly of axonemal dyneins, thereby playing a central role in motility in cilia and flagella. Involved in pre-assembly of dynein arm complexes in the cytoplasm before intraflagellar transport loads them for the ciliary compartment. The polypeptide is Protein kintoun (Drosophila grimshawi (Hawaiian fruit fly)).